Here is an 859-residue protein sequence, read N- to C-terminus: Leucine--tRNA ligase (859 aa).

The short motif at 43 to 53 (PYPSGRIHMGH) is the 'HIGH' region element. The 'KMSKS' region motif lies at 614–618 (KMSKS). Position 617 (Lys617) interacts with ATP.

The protein belongs to the class-I aminoacyl-tRNA synthetase family.

It localises to the cytoplasm. The enzyme catalyses tRNA(Leu) + L-leucine + ATP = L-leucyl-tRNA(Leu) + AMP + diphosphate. This chain is Leucine--tRNA ligase, found in Magnetococcus marinus (strain ATCC BAA-1437 / JCM 17883 / MC-1).